Here is a 198-residue protein sequence, read N- to C-terminus: MHICIINSIIWFIVKYKKKHGYSLFVEFTHAYGIGEGTSVNMRGVNIGYIKNLQINSNSVLVSIYIKSEKILIPKNSIIETNQTSLFNNTIIDIIPLEKINNYSIRDFNVFNQNCYDLQIFCNNQYIIGDRGLNYDDLIRATTRIAQRFDDPRFFNLFYLFLQNTIEISDDFILTFNNISSMSYYLYIFCRDFLLNNI.

The protein resides in the plastid. It localises to the chloroplast. This is an uncharacterized protein from Antithamnion sp. (Red alga).